The chain runs to 1500 residues: Carbamoyl-phosphate synthase [ammonia], mitochondrial (1500 aa).

Residues 1–38 constitute a mitochondrion transit peptide; the sequence is MTRILTACKVVKTLKSGFGFANVTTKRQWDFSRPGIRL. The anthranilate phosphoribosyltransferase homolog stretch occupies residues 39–218; the sequence is LSVKAKTAHI…VKVFGKGNPT (180 aa). K44, K55, K57, and K119 each carry N6-acetyllysine; alternate. K44, K55, K57, and K119 each carry N6-succinyllysine; alternate. N6-glutaryllysine; alternate is present on K55. A Phosphoserine modification is found at S148. K157 and K171 each carry N6-acetyllysine; alternate. The residue at position 157 (K157) is an N6-succinyllysine; alternate. K171 is modified (N6-glutaryllysine; alternate). K176 carries the N6-glutaryllysine modification. At K182 the chain carries N6-acetyllysine. Position 189 is a phosphoserine (S189). K197 carries the N6-acetyllysine modification. N6-acetyllysine; alternate occurs at positions 207, 210, 214, 219, and 228. K207 is subject to N6-succinyllysine; alternate. 5 positions are modified to N6-glutaryllysine; alternate: K207, K210, K214, K219, and K228. At K214 the chain carries N6-succinyllysine; alternate. The region spanning 219-404 is the Glutamine amidotransferase type-1 domain; that stretch reads KVVAVDCGIK…FSLIKKGKGT (186 aa). Position 237 is an N6-glutaryllysine (K237). At K279 the chain carries N6-acetyllysine. 4 positions are modified to N6-acetyllysine; alternate: K280, K287, K307, and K310. K280 is subject to N6-glutaryllysine; alternate. 2 positions are modified to N6-succinyllysine; alternate: K287 and K307. An N6-glutaryllysine; alternate mark is found at K307 and K310. Position 400 is an N6-succinyllysine (K400). K402 and K412 each carry N6-succinyllysine; alternate. 4 positions are modified to N6-glutaryllysine; alternate: K402, K412, K453, and K458. K412, K453, K458, K522, K527, and K532 each carry N6-acetyllysine; alternate. An N6-succinyllysine; alternate mark is found at K458, K522, and K527. 2 positions are modified to N6-glutaryllysine; alternate: K527 and K532. Residue S537 is modified to Phosphoserine; alternate. S537 carries O-linked (GlcNAc) serine; alternate glycosylation. A Phosphoserine modification is found at S540. The ATP-grasp 1 domain maps to 551–743; it reads SDKLNEINEK…LAFIAAKIAL (193 aa). 2 positions are modified to N6-acetyllysine; alternate: K553 and K560. N6-succinyllysine; alternate occurs at positions 553 and 560. K553 carries the N6-glutaryllysine; alternate modification. The residue at position 569 (S569) is a Phosphoserine. N6-acetyllysine; alternate is present on residues K575, K603, and K612. N6-succinyllysine; alternate occurs at positions 575, 603, and 612. At K630 the chain carries N6-acetyllysine. N6-glutaryllysine is present on K728. An N6-acetyllysine; alternate mark is found at K751, K757, K772, K793, K811, K831, K840, K841, K856, K875, K889, and K892. K751 and K757 each carry N6-succinyllysine; alternate. Residues K757, K772, K793, and K811 each carry the N6-glutaryllysine; alternate modification. K793 is modified (N6-succinyllysine; alternate). 2 positions are modified to N6-succinyllysine; alternate: K831 and K840. N6-glutaryllysine; alternate occurs at positions 841, 856, 875, 889, and 892. 3 positions are modified to N6-succinyllysine; alternate: K875, K889, and K892. 2 positions are modified to phosphoserine: S896 and S898. N6-acetyllysine; alternate is present on residues K908, K915, and K919. N6-glutaryllysine; alternate occurs at positions 908, 915, and 919. 2 positions are modified to N6-succinyllysine; alternate: K915 and K919. K935 carries the N6-acetyllysine modification. S1036 carries the post-translational modification Phosphoserine. K1074 is modified (N6-acetyllysine; alternate). K1074 carries the post-translational modification N6-succinyllysine; alternate. Position 1074 is an N6-glutaryllysine; alternate (K1074). Phosphoserine occurs at positions 1079, 1090, and 1093. The region spanning 1093-1284 is the ATP-grasp 2 domain; sequence SAVLDELKVA…FIDVATKVMI (192 aa). K1100 is subject to N6-acetyllysine; alternate. N6-succinyllysine; alternate is present on K1100. K1149 carries the post-translational modification N6-succinyllysine. 2 positions are modified to N6-acetyllysine; alternate: K1168 and K1183. Residues K1168 and K1183 each carry the N6-succinyllysine; alternate modification. N6-glutaryllysine; alternate occurs at positions 1168 and 1183. S1203 is modified (phosphoserine). K1222 carries the post-translational modification N6-acetyllysine. K1224 carries the post-translational modification N6-glutaryllysine. Residues K1232, K1269, and K1291 each carry the N6-acetyllysine; alternate modification. Residues K1232, K1269, and K1291 each carry the N6-succinyllysine; alternate modification. S1331 carries an O-linked (GlcNAc) serine glycan. O-linked (GlcNAc) threonine glycosylation is present at T1332. One can recognise an MGS-like domain in the interval 1355–1500; it reads FKIPQKGILI…YRQYSAGKAA (146 aa). K1356 carries the N6-acetyllysine; alternate modification. An N6-succinyllysine; alternate mark is found at K1356 and K1360. N6-glutaryllysine; alternate is present on residues K1356 and K1360. N-acetyl-L-glutamate contacts are provided by T1391, T1394, and W1410. Phosphoserine is present on residues S1419 and S1431. N-acetyl-L-glutamate is bound by residues N1437 and N1440. K1444 is subject to N6-acetyllysine; alternate. N6-succinyllysine; alternate is present on K1444. N1449 lines the N-acetyl-L-glutamate pocket. N6-acetyllysine; alternate is present on residues K1471, K1479, and K1486. Residues K1471, K1479, and K1486 each carry the N6-succinyllysine; alternate modification. K1479 and K1486 each carry N6-glutaryllysine; alternate.

Can form homooligomers (monomers as predominant form and dimers). As to quaternary structure, (Microbial infection) Interacts with P.berghei (ANKA strain) phospholipid scramblase PLSCR; the interaction is involved in the interaction between parasite sporozoites and host hepatocytes. Post-translationally, undergoes proteolytic cleavage in the C-terminal region corresponding to the loss of approximately 12 AA residues from the C-terminus. Acetylation of Lys-287, Lys-603, Lys-841 and Lys-1291 is observed in liver mitochondria from fasted mice but not from fed mice. In terms of processing, succinylated at Lys-44, Lys-287 and Lys-1291. Desuccinylated at Lys-1291 by SIRT5, leading to activation. Post-translationally, glutarylated. Glutarylation levels increase during fasting. Deglutarylated by SIRT5 at Lys-55, Lys-219, Lys-412, Lys-889, Lys-892, Lys-915, Lys-1360 and Lys-1486, leading to activation. In terms of tissue distribution, expressed in hepatocytes (at protein level).

The protein resides in the mitochondrion. It is found in the nucleus. It localises to the nucleolus. The protein localises to the cell membrane. It carries out the reaction hydrogencarbonate + NH4(+) + 2 ATP = carbamoyl phosphate + 2 ADP + phosphate + 2 H(+). With respect to regulation, requires N-acetyl-L-glutamate (NAG) as an allosteric activator. Involved in the urea cycle of ureotelic animals where the enzyme plays an important role in removing excess ammonia from the cell. This is Carbamoyl-phosphate synthase [ammonia], mitochondrial (Cps1) from Mus musculus (Mouse).